The primary structure comprises 429 residues: Ribosomal RNA small subunit methyltransferase B (429 aa).

S-adenosyl-L-methionine-binding positions include 254-260 (CAAPGGK), Asp-277, Asp-303, and Asp-322. The active-site Nucleophile is the Cys-375. The tract at residues 397-419 (ALSETGTPDQPGQQNLPGGEEGD) is disordered. Polar residues predominate over residues 400–412 (ETGTPDQPGQQNL).

The protein belongs to the class I-like SAM-binding methyltransferase superfamily. RsmB/NOP family.

The protein localises to the cytoplasm. It catalyses the reaction cytidine(967) in 16S rRNA + S-adenosyl-L-methionine = 5-methylcytidine(967) in 16S rRNA + S-adenosyl-L-homocysteine + H(+). Its function is as follows. Specifically methylates the cytosine at position 967 (m5C967) of 16S rRNA. This is Ribosomal RNA small subunit methyltransferase B from Salmonella typhi.